Consider the following 859-residue polypeptide: Bifunctional uridylyltransferase/uridylyl-removing enzyme (859 aa).

The segment at 1–325 (MSAHAAPSPE…PATSGITRVL (325 aa)) is uridylyltransferase. Residues 326–682 (SHDRFVEKQG…ARPSPIGDAL (357 aa)) are uridylyl-removing. Positions 444-566 (VDQHILMVLR…VGNERYLTAL (123 aa)) constitute an HD domain. ACT domains lie at 683 to 762 (QVLV…PEPS) and 791 to 859 (ILSV…AIAV).

Belongs to the GlnD family. Mg(2+) is required as a cofactor.

The catalysed reaction is [protein-PII]-L-tyrosine + UTP = [protein-PII]-uridylyl-L-tyrosine + diphosphate. It carries out the reaction [protein-PII]-uridylyl-L-tyrosine + H2O = [protein-PII]-L-tyrosine + UMP + H(+). With respect to regulation, uridylyltransferase (UTase) activity is inhibited by glutamine, while glutamine activates uridylyl-removing (UR) activity. Modifies, by uridylylation and deuridylylation, the PII regulatory proteins (GlnB and homologs), in response to the nitrogen status of the cell that GlnD senses through the glutamine level. Under low glutamine levels, catalyzes the conversion of the PII proteins and UTP to PII-UMP and PPi, while under higher glutamine levels, GlnD hydrolyzes PII-UMP to PII and UMP (deuridylylation). Thus, controls uridylylation state and activity of the PII proteins, and plays an important role in the regulation of nitrogen fixation and metabolism. This is Bifunctional uridylyltransferase/uridylyl-removing enzyme from Burkholderia vietnamiensis (strain G4 / LMG 22486) (Burkholderia cepacia (strain R1808)).